A 347-amino-acid polypeptide reads, in one-letter code: GMP reductase (347 aa).

108 to 131 is a binding site for NADP(+); sequence ADFQKTKDVMALSDELIFICIDIA. The K(+) site is built by Gly181 and Gly183. Cys186 acts as the Thioimidate intermediate in catalysis. 216–239 provides a ligand contact to NADP(+); the sequence is IIGDGGCTCPGDVAKAFGGGADFV.

It belongs to the IMPDH/GMPR family. GuaC type 1 subfamily. In terms of assembly, homotetramer.

It carries out the reaction IMP + NH4(+) + NADP(+) = GMP + NADPH + 2 H(+). Catalyzes the irreversible NADPH-dependent deamination of GMP to IMP. It functions in the conversion of nucleobase, nucleoside and nucleotide derivatives of G to A nucleotides, and in maintaining the intracellular balance of A and G nucleotides. In Vibrio cholerae serotype O1 (strain ATCC 39541 / Classical Ogawa 395 / O395), this protein is GMP reductase.